The primary structure comprises 37 residues: Cytochrome b6-f complex subunit 5 (37 aa).

The helical transmembrane segment at 5–25 threads the bilayer; sequence LLSGIVLGMIPVTLAGLFVTA.

This sequence belongs to the PetG family. The 4 large subunits of the cytochrome b6-f complex are cytochrome b6, subunit IV (17 kDa polypeptide, PetD), cytochrome f and the Rieske protein, while the 4 small subunits are PetG, PetL, PetM and PetN. The complex functions as a dimer.

It localises to the plastid. Its subcellular location is the chloroplast thylakoid membrane. In terms of biological role, component of the cytochrome b6-f complex, which mediates electron transfer between photosystem II (PSII) and photosystem I (PSI), cyclic electron flow around PSI, and state transitions. PetG is required for either the stability or assembly of the cytochrome b6-f complex. The sequence is that of Cytochrome b6-f complex subunit 5 from Staurastrum punctulatum (Green alga).